The chain runs to 1397 residues: ABC transporter G family member 41 (1397 aa).

The ABC transporter 1 domain occupies 138 to 411 (SLSKFVCSKK…FEGCGFKCPE (274 aa)). ATP is bound at residue 171-178 (GPPGCGKT). An ABC transmembrane type-2 1 domain is found at 489–701 (EMLKACSRRE…AEIGLTANEF (213 aa)). A run of 6 helical transmembrane segments spans residues 507–527 (FIYL…MTVF), 549–570 (ALFR…RLGV), 594–614 (IPLS…VIGY), 625–645 (FIIL…IASI), 651–671 (ACSI…GFVI), and 735–755 (TAFG…TLAL). In terms of domain architecture, ABC transporter 2 spans 805-1050 (VTFQNVQYYI…VIKYFESIPG (246 aa)). 842–849 (GVSGAGKT) is a binding site for ATP. Residues 1122–1336 (GQLKACLWKQ…VLEGLLSSQY (215 aa)) enclose the ABC transmembrane type-2 2 domain. The next 7 helical transmembrane spans lie at 1141–1161 (HNLT…LLFW), 1173–1193 (LFSI…NNCA), 1229–1249 (VPYS…MIGY), 1260–1280 (LYSI…MVAL), 1286–1306 (MALT…GFVM), 1314–1334 (WWIW…LLSS), and 1369–1389 (VVAF…AFFM).

The protein belongs to the ABC transporter superfamily. ABCG family. PDR (TC 3.A.1.205) subfamily. In terms of tissue distribution, confined to roots.

The protein localises to the membrane. Its function is as follows. May be a general defense protein. The sequence is that of ABC transporter G family member 41 (ABCG41) from Arabidopsis thaliana (Mouse-ear cress).